Reading from the N-terminus, the 950-residue chain is Voltage-gated inwardly rectifying potassium channel KCNH6 (950 aa).

The Cytoplasmic segment spans residues 1-261 (MPVRRGHVAP…YSPFKAVWDW (261 aa)). A PAS domain is found at 41–70 (IIYCNDGFCELFGYSRVEVMQRPCTCDFLT). The PAC domain maps to 92-144 (CKVDILYYRKDASSFRCLVDVVPVKNEDGAVIMFILNFEDLAQLLAKSSSRSL). The interval 154–174 (LGSEGSHSRPSGQGPGPGRGK) is disordered. A helical membrane pass occupies residues 262–282 (LILLLVIYTAVFTPYSAAFLL). At 283–298 (SDQDESQRGTCGYTCS) the chain is on the extracellular side. Residues 299–319 (PLTVVDLIVDIMFVVDIVINF) traverse the membrane as a helical segment. Over 320–340 (RTTYVNTNDEVVSHPRRIAVH) the chain is Cytoplasmic. Residues 341-361 (YFKGWFLIDMVAAIPFDLLIF) form a helical membrane-spanning segment. Residues 362 to 370 (RTGSDETTT) are Extracellular-facing. Residues 371-391 (LIGLLKTARLLRLVRVARKLD) form a helical; Voltage-sensor membrane-spanning segment. At 392-398 (RYSEYGA) the chain is on the cytoplasmic side. A helical membrane pass occupies residues 399–419 (AVLFLLMCTFALIAHWLACIW). Topologically, residues 420 to 463 (YAIGNVERPYLEPKIGWLDSLGAQLGKQYNGSDPASGPSVQDKY) are extracellular. Residues 464–484 (VTALYFTFSSLTSVGFGNVSP) constitute an intramembrane region (pore-forming). Positions 476 to 481 (SVGFGN) match the Selectivity filter motif. Topologically, residues 485–490 (NTNSEK) are extracellular. Residues 491-511 (VFSICVMLIGSLMYASIFGNV) form a helical membrane-spanning segment. Over 512 to 950 (SAIIQRLYSG…HGSDPGFTRS (439 aa)) the chain is Cytoplasmic. Positions 594–694 (AFRGASKGCL…IHRADLLEVL (101 aa)) are cNMP-binding domain. Disordered regions lie at residues 719–750 (GGLQSTPRQAPGHQDPQGFFLNDSQSGAAPSL) and 890–950 (VPSS…FTRS). Over residues 740–750 (NDSQSGAAPSL) the composition is skewed to polar residues. Over residues 898-912 (PGGLLSPLASPLRPL) the composition is skewed to low complexity.

This sequence belongs to the potassium channel family. H (Eag) (TC 1.A.1.20) subfamily. Kv11.2/KCNH6 sub-subfamily. The potassium channel is probably composed of a homo- or heterotetrameric complex of pore-forming alpha subunits that can associate only within their subfamily. As to expression, highly expressed in celiac and superior mesenteric ganglia, but not detected in brain or in heart. Detected at low levels in retina. Also found in pituitary. Also found in the olfactory bulb (granular and mitral cell layers).

The protein resides in the cell membrane. It catalyses the reaction K(+)(in) = K(+)(out). In terms of biological role, pore-forming (alpha) subunit of voltage-gated inwardly rectifying potassium channel. Characterized by unusual gating kinetics by producing relatively small outward currents during membrane depolarization and large inward currents during subsequent repolarization which reflect a rapid inactivation during depolarization and quick recovery from inactivation but slow deactivation (closing) during repolarization. Activates even more slowly than KCNH2. The chain is Voltage-gated inwardly rectifying potassium channel KCNH6 from Rattus norvegicus (Rat).